Here is a 398-residue protein sequence, read N- to C-terminus: Cyclic GMP-AMP synthase-like receptor (398 aa).

ATP contacts are provided by residues serine 57 and 69–71 (EFD). Mg(2+) contacts are provided by glutamate 69, aspartate 71, and aspartate 192. GTP is bound by residues aspartate 192 and 240–247 (SLSFQEQE). ATP is bound by residues 244 to 247 (QEQE), lysine 265, and 277 to 281 (SYYIK). Mn(2+) is bound by residues isoleucine 288, glutamate 289, and aspartate 292.

Belongs to the mab-21 family. Mg(2+) serves as cofactor. Requires Mn(2+) as cofactor.

The catalysed reaction is GTP + ATP = 2',3'-cGAMP + 2 diphosphate. The enzyme catalyses GTP + ATP = pppGp(2'-5')A + diphosphate. It catalyses the reaction pppGp(2'-5')A = 2',3'-cGAMP + diphosphate. Its activity is regulated as follows. The enzyme activity is specifically activated by double-stranded RNA (dsRNA). Functionally, nucleotidyltransferase that catalyzes the formation of cyclic GMP-AMP (2',3'-cGAMP) from ATP and GTP and plays a key role in innate immunity. Acts as a key sensor of double-stranded RNA (dsRNA), the presence of dsRNA in the cytoplasm being a danger signal that triggers the immune responses. Directly binds dsRNA, activating the nucleotidyltransferase activity, leading to synthesis of 2',3'-cGAMP, a second messenger that binds to and activates Sting, thereby triggering the antiviral immune response via activation of the NF-kappa-B transcription factor Rel (Relish). The protein is Cyclic GMP-AMP synthase-like receptor of Tribolium castaneum (Red flour beetle).